Reading from the N-terminus, the 351-residue chain is UDP-N-acetylglucosamine--N-acetylmuramyl-(pentapeptide) pyrophosphoryl-undecaprenol N-acetylglucosamine transferase (351 aa).

UDP-N-acetyl-alpha-D-glucosamine is bound by residues 12 to 14, N124, R160, S188, I239, 258 to 263, and Q283; these read TGG and ALTVCE.

The protein belongs to the glycosyltransferase 28 family. MurG subfamily.

Its subcellular location is the cell inner membrane. It catalyses the reaction di-trans,octa-cis-undecaprenyl diphospho-N-acetyl-alpha-D-muramoyl-L-alanyl-D-glutamyl-meso-2,6-diaminopimeloyl-D-alanyl-D-alanine + UDP-N-acetyl-alpha-D-glucosamine = di-trans,octa-cis-undecaprenyl diphospho-[N-acetyl-alpha-D-glucosaminyl-(1-&gt;4)]-N-acetyl-alpha-D-muramoyl-L-alanyl-D-glutamyl-meso-2,6-diaminopimeloyl-D-alanyl-D-alanine + UDP + H(+). Its pathway is cell wall biogenesis; peptidoglycan biosynthesis. Functionally, cell wall formation. Catalyzes the transfer of a GlcNAc subunit on undecaprenyl-pyrophosphoryl-MurNAc-pentapeptide (lipid intermediate I) to form undecaprenyl-pyrophosphoryl-MurNAc-(pentapeptide)GlcNAc (lipid intermediate II). This Glaesserella parasuis serovar 5 (strain SH0165) (Haemophilus parasuis) protein is UDP-N-acetylglucosamine--N-acetylmuramyl-(pentapeptide) pyrophosphoryl-undecaprenol N-acetylglucosamine transferase.